An 833-amino-acid polypeptide reads, in one-letter code: Multiphosphoryl transfer protein 2 (833 aa).

The HPr domain maps to 2-91 (ALIVEFICEL…QWLRDEFPHC (90 aa)). Residue histidine 16 is the Tele-phosphohistidine intermediate; for HPr activity of the active site. The residue at position 16 (histidine 16) is a Phosphohistidine; by EI. The segment at 143 to 653 (LGNLPAAKGV…AAKARMAQLD (511 aa)) is PTS EI. Histidine 301 serves as the catalytic Tele-phosphohistidine intermediate; for PTS EI activity. Position 301 is a phosphohistidine; by autocatalysis (histidine 301). Phosphoenolpyruvate-binding residues include arginine 408 and arginine 444. 2 residues coordinate Mg(2+): glutamate 543 and aspartate 567. Phosphoenolpyruvate-binding positions include 566–567 (ND) and arginine 577. Cysteine 614 (proton donor; for EI activity) is an active-site residue. A PTS EIIA type-2 domain is found at 688–830 (PLVTAECITL…DAIASLLQHE (143 aa)). Residue histidine 750 is the Tele-phosphohistidine intermediate; for PTS EIIA activity of the active site. Residue histidine 750 is modified to Phosphohistidine; by HPr.

This sequence belongs to the PEP-utilizing enzyme family. The cofactor is Mg(2+).

The protein resides in the cytoplasm. The catalysed reaction is L-histidyl-[protein] + phosphoenolpyruvate = N(pros)-phospho-L-histidyl-[protein] + pyruvate. It catalyses the reaction D-fructose(out) + N(pros)-phospho-L-histidyl-[protein] = D-fructose 1-phosphate(in) + L-histidyl-[protein]. In terms of biological role, multifunctional protein that includes general (non sugar-specific) and sugar-specific components of the phosphoenolpyruvate-dependent sugar phosphotransferase system (sugar PTS). This major carbohydrate active transport system catalyzes the phosphorylation of incoming sugar substrates concomitantly with their translocation across the cell membrane. The enzyme II FrwABC PTS system is involved in fructose transport. This is Multiphosphoryl transfer protein 2 from Escherichia coli (strain K12).